Reading from the N-terminus, the 400-residue chain is MAIHKIRAFFNLEASGGIVLALAAIAAMIIANTSLNTWYESFIHAPVAIQIGSFSIAKDAHHWINDGLMAVFFFLVGLELKREVLIGELSNVKQIILPAGAALGGMVMPAIVYLFFNYNEPEFWRGWAIPTATDIAFALGILSLLGNRVPNSLKVFLVSIAIFDDIGAIIIIALFYTNDLSLGSLAIAGLCLPFLYMLNRRNVTSITPYLLIGVIMWIAVLKSGIHATLAGVVLALFIPLFDRTDPEHSPLEELEHDLQNTVSYGILPLFAFANAGISLKGAGFGELFHSVPLGIAAGLFIGKQVGVMLMCWLIFKLGISTMPKGMNFKQIYGAALLCGVGFTMSLFIGGLAFAGETPLFDERLGIIMGSIVSGIAGYMMLKTTLKDEVNVTSVDLTRHS.

11 helical membrane passes run 10 to 30 (FNLEASGGIVLALAAIAAMII), 60 to 80 (AHHWINDGLMAVFFFLVGLEL), 95 to 115 (IILPAGAALGGMVMPAIVYLF), 126 to 146 (GWAIPTATDIAFALGILSLLG), 155 to 175 (VFLVSIAIFDDIGAIIIIALF), 178 to 198 (NDLSLGSLAIAGLCLPFLYML), 218 to 238 (IAVLKSGIHATLAGVVLALFI), 265 to 285 (GILPLFAFANAGISLKGAGFG), 295 to 315 (IAAGLFIGKQVGVMLMCWLIF), 334 to 354 (AALLCGVGFTMSLFIGGLAFA), and 364 to 384 (LGIIMGSIVSGIAGYMMLKTT).

The protein belongs to the NhaA Na(+)/H(+) (TC 2.A.33) antiporter family.

Its subcellular location is the cell inner membrane. It catalyses the reaction Na(+)(in) + 2 H(+)(out) = Na(+)(out) + 2 H(+)(in). In terms of biological role, na(+)/H(+) antiporter that extrudes sodium in exchange for external protons. The polypeptide is Na(+)/H(+) antiporter NhaA (Psychrobacter arcticus (strain DSM 17307 / VKM B-2377 / 273-4)).